The chain runs to 202 residues: Imidazoleglycerol-phosphate dehydratase (202 aa).

Belongs to the imidazoleglycerol-phosphate dehydratase family.

The protein resides in the cytoplasm. It catalyses the reaction D-erythro-1-(imidazol-4-yl)glycerol 3-phosphate = 3-(imidazol-4-yl)-2-oxopropyl phosphate + H2O. Its pathway is amino-acid biosynthesis; L-histidine biosynthesis; L-histidine from 5-phospho-alpha-D-ribose 1-diphosphate: step 6/9. The polypeptide is Imidazoleglycerol-phosphate dehydratase (Corynebacterium efficiens (strain DSM 44549 / YS-314 / AJ 12310 / JCM 11189 / NBRC 100395)).